Here is a 487-residue protein sequence, read N- to C-terminus: Protein SMG9 (487 aa).

Disordered stretches follow at residues 30-83 and 136-164; these read EDAA…PPAL and RDKG…LQPP. Residues 42–70 are compositionally biased toward basic and acidic residues; the sequence is LKKDRDREQETWDRERDKDRKLERDREAE.

It belongs to the SMG9 family.

Functionally, involved in nonsense-mediated decay (NMD) of mRNAs containing premature stop codons. Probable component of kinase complex containing nonC and recruited to stalled ribosomes. The sequence is that of Protein SMG9 from Drosophila melanogaster (Fruit fly).